The primary structure comprises 351 residues: Selenide, water dikinase (351 aa).

Residue Sec-15 is part of the active site. A non-standard amino acid (selenocysteine) is located at residue Sec-15. Residues Lys-18 and 47-49 (DNE) each bind ATP. Asp-50 is a Mg(2+) binding site. ATP is bound by residues Asp-67, Asp-90, and 138-140 (GHS). Asp-90 serves as a coordination point for Mg(2+). Mg(2+) is bound at residue Asp-227.

The protein belongs to the selenophosphate synthase 1 family. Class I subfamily. In terms of assembly, homodimer. The cofactor is Mg(2+).

The catalysed reaction is hydrogenselenide + ATP + H2O = selenophosphate + AMP + phosphate + 2 H(+). Synthesizes selenophosphate from selenide and ATP. This is Selenide, water dikinase from Nitratidesulfovibrio vulgaris (strain DP4) (Desulfovibrio vulgaris).